A 55-amino-acid polypeptide reads, in one-letter code: Large ribosomal subunit protein bL33 (55 aa).

The protein belongs to the bacterial ribosomal protein bL33 family.

The sequence is that of Large ribosomal subunit protein bL33 from Methylocella silvestris (strain DSM 15510 / CIP 108128 / LMG 27833 / NCIMB 13906 / BL2).